We begin with the raw amino-acid sequence, 159 residues long: UPF0262 protein Dshi_0980 (159 aa).

This sequence belongs to the UPF0262 family.

This Dinoroseobacter shibae (strain DSM 16493 / NCIMB 14021 / DFL 12) protein is UPF0262 protein Dshi_0980.